Here is a 193-residue protein sequence, read N- to C-terminus: MPVWGGGNKCGACGRTVYHAEEVQCDGRTFHRCCFLCMVCRKNLDSTTVAIHDEEIYCKSCYGKKYGPKGYGYGQGAGTLNMDRGERLGIKPESAQPHRPTTNPNTSKFAQKYGGAEKCSRCGDSVYAAEKIIGAGKPWHKNCFRCAKCGKSLESTTLTEKEGEIYCKGCYAKNFGPKGFGYGQGAGALVHAQ.

An LIM zinc-binding 1 domain is found at cysteine 10–cysteine 61. Positions lysine 64–lysine 69 match the Nuclear localization signal motif. Lysine 91 participates in a covalent cross-link: Glycyl lysine isopeptide (Lys-Gly) (interchain with G-Cter in SUMO2). 2 positions are modified to N6-acetyllysine: lysine 112 and lysine 131. Residues cysteine 119–cysteine 170 enclose the LIM zinc-binding 2 domain. Lysine 137 is modified (N6-acetyllysine; alternate). An N6-succinyllysine; alternate modification is found at lysine 137. N6-acetyllysine is present on lysine 161.

In terms of assembly, interacts with KAT14. The LIM domain 1 is necessary and sufficient for this interaction. Interacts with GLRX3. Highly expressed in the aorta; weakly found in the kidney, thymus, and intestine. Barely detectable in brain, testis, esophagus, lung, liver, aortic adventitia, vena cava, or uterus; not present in heart and skeletal muscle.

It localises to the nucleus. In terms of biological role, drastically down-regulated in response to PDGF-BB or cell injury, that promote smooth muscle cell proliferation and dedifferentiation. Seems to play a role in the development of the embryonic vascular system. This is Cysteine and glycine-rich protein 2 (Csrp2) from Rattus norvegicus (Rat).